Reading from the N-terminus, the 333-residue chain is UPF0284 protein TGAM_0534 (333 aa).

It belongs to the UPF0284 family.

The protein is UPF0284 protein TGAM_0534 of Thermococcus gammatolerans (strain DSM 15229 / JCM 11827 / EJ3).